Consider the following 408-residue polypeptide: MLVEINPSKIYGKVKAPQSKSFGIRLVLYSLLKESKLDNLIPSDDVNVAINVVKQLGVSVEGTYFKREKELVTPKFLYFGGSATTLRMSIPILSVLGVDTIIDGDETLRKRPLNAIIKALEGSVSFSSSLLPTKISGKLKENFVRIEGGESSQYISGFIYAFSLVGGGEIEIIPPISSKSYIYLTIELLNSLGGNIKMKGNKIYVEKGDFKPYIGKVPGDYALASFYASSSIVSGGEIVIEDVYELPNFDGDHSIVNFYKMMGAESYVKDNKWIVKSSEKLNGIEVNVDDYPDLAPSIASLAPFSSSPTIIKGIKRLKTKESNRVVTISETLSKFGVKVEYDEDKIVIYPSEVKAGHVICPNDHRIAMLASVLSFKSGGTIEKAECVNKSNPNFWKDLISLNGRIIIR.

Positions 20, 21, and 25 each coordinate 3-phosphoshikimate. Position 20 (Lys20) interacts with phosphoenolpyruvate. Arg111 lines the phosphoenolpyruvate pocket. 3-phosphoshikimate contacts are provided by Ser151, Ser152, Gln153, Ser178, Asp293, and Lys320. Gln153 serves as a coordination point for phosphoenolpyruvate. The active-site Proton acceptor is the Asp293. Phosphoenolpyruvate-binding residues include Arg324, Arg365, and Lys389.

The protein belongs to the EPSP synthase family. As to quaternary structure, monomer.

It localises to the cytoplasm. The enzyme catalyses 3-phosphoshikimate + phosphoenolpyruvate = 5-O-(1-carboxyvinyl)-3-phosphoshikimate + phosphate. Its pathway is metabolic intermediate biosynthesis; chorismate biosynthesis. Its function is as follows. Catalyzes the transfer of the enolpyruvyl moiety of phosphoenolpyruvate (PEP) to the 5-hydroxyl of shikimate-3-phosphate (S3P) to produce enolpyruvyl shikimate-3-phosphate and inorganic phosphate. This Sulfurisphaera tokodaii (strain DSM 16993 / JCM 10545 / NBRC 100140 / 7) (Sulfolobus tokodaii) protein is 3-phosphoshikimate 1-carboxyvinyltransferase.